The sequence spans 149 residues: Calmodulin-1 (149 aa).

N-acetylalanine is present on alanine 2. EF-hand domains lie at 8–43, 44–79, 81–116, and 117–149; these read EQIAEFKEAFSLFDKDGDGTITTKELGTVMRSLGQN, PTEAELQDMINEVDADGNGTIDFPEFLTMMARKMKD, DSEEEIREAFRVFDKDGNGYISAAELRHVMTNLGEK, and LTDEEVDEMIREADIDGDGQVNYEEFVQMMTAK. Aspartate 21 provides a ligand contact to Ca(2+). The residue at position 22 (lysine 22) is an N6-acetyllysine; alternate. A Glycyl lysine isopeptide (Lys-Gly) (interchain with G-Cter in SUMO2); alternate cross-link involves residue lysine 22. Lysine 22 is covalently cross-linked (Glycyl lysine isopeptide (Lys-Gly) (interchain with G-Cter in ubiquitin); alternate). Residues aspartate 23, aspartate 25, threonine 27, and glutamate 32 each contribute to the Ca(2+) site. Phosphothreonine; by CaMK4 is present on threonine 45. Ca(2+) is bound by residues aspartate 57, aspartate 59, asparagine 61, threonine 63, and glutamate 68. A necessary and sufficient for interaction with PCP4 region spans residues 77 to 149; it reads MKDTDSEEEI…EEFVQMMTAK (73 aa). A Phosphoserine modification is found at serine 82. Ca(2+) is bound at residue aspartate 94. Lysine 95 is modified (N6-acetyllysine). Residues aspartate 96, asparagine 98, and tyrosine 100 each contribute to the Ca(2+) site. Tyrosine 100 is subject to Phosphotyrosine. Serine 102 carries the phosphoserine modification. Glutamate 105 provides a ligand contact to Ca(2+). At threonine 111 the chain carries Phosphothreonine. Lysine 116 carries the post-translational modification N6,N6,N6-trimethyllysine; alternate. The residue at position 116 (lysine 116) is an N6-methyllysine; alternate. The Ca(2+) site is built by aspartate 130, aspartate 132, aspartate 134, and glutamine 136. Tyrosine 139 is subject to Phosphotyrosine. Position 141 (glutamate 141) interacts with Ca(2+).

The protein belongs to the calmodulin family. As to quaternary structure, homotetramer. Interacts with MYO1C, MYO5A and RRAD. Interacts with MYO10. Interacts with CEP97, CCP110, TTN/titin and SRY. Interacts with USP6; the interaction is calcium dependent. Interacts with CDK5RAP2. Interacts with SCN5A. Interacts with RYR1. Interacts with FCHO1. Interacts with MIP in a 1:2 stoichiometry; the interaction with the cytoplasmic domains from two MIP subunits promotes MIP water channel closure. Interacts with ORAI1; this may play a role in the regulation of ORAI1-mediated calcium transport. Interacts with IQCF1. Interacts with SYT7. Interacts with CEACAM1 (via cytoplasmic domain); this interaction is in a calcium dependent manner and reduces homophilic cell adhesion through dissociation of dimer. Interacts with RYR2; regulates RYR2 calcium-release channel activity. Interacts with PCP4; regulates calmodulin calcium-binding. Interacts with the heterotetrameric KCNQ2 and KCNQ3 channel; the interaction is calcium-independent, constitutive and participates in the proper assembly of a functional heterotetrameric M channel. Interacts with alpha-synuclein/SNCA. Interacts with SLC9A1 in a calcium-dependent manner. In the absence of Ca(+2), interacts with GIMAP4 (via IQ domain). Interacts with SCN8A; the interaction modulates the inactivation rate of SCN8A. Interaction with KIF1A; the interaction is increased in presence of calcium and increases neuronal dense core vesicles motility. Interacts with KCNN3. Interacts with KCNQ1 (via C-terminus); forms a heterooctameric structure (with 4:4 KCNQ1:CALM stoichiometry) in a calcium-independent manner. Interacts with PIK3C3; the interaction modulates PIK3C3 kinase activity. Interacts with HINT1; interaction increases in the presence of calcium ions. Interacts with HINT3. Interacts with GARIN2; in mature sperm flagella. Interacts with IQUB. Interacts with SLC26A5 (via STAS domain); this interaction is calcium-dependent and the STAS domain interacts with only one lobe of CALM which is an elongated conformation. Ca(2+)-bound CALM1 binds CNGA1:CNGB1 channel (via CaM1 and CaM2 regions); this interaction modulates the affinity of the channel for cNMPs in response to intracellular Ca(2+) levels. Interacts with ITPR1; this interaction inhibits inositol 1,4,5 trisphosphate binding in both the presence and absence of calcium and 1,4,5 trisphosphate-induced calcium release in the presence of calcium. Component of the SIFI complex. Interacts with KCNN4; this interaction allows channel opening. Interacts with KCNN2; this interaction regulates the channel activity through calcium-binding. (Microbial infection) Interacts with Rubella virus protease/methyltransferase p150. In terms of assembly, (Microbial infection) Interacts with Legionella pneumophila glutamylase SidJ. As to quaternary structure, (Microbial infection) Interacts with C.violaceum CopC. C.violaceum CopC interacts specifically with the apo form of calmodulin. (Microbial infection) Interacts with S.flexneri OspC1 and OspC3. S.flexneri OspC1 and OspC3 interact specifically with the apo form of calmodulin and prevents calcium-binding. In terms of processing, ubiquitination results in a strongly decreased activity. Post-translationally, phosphorylation results in a decreased activity.

The protein localises to the cytoplasm. It is found in the cytoskeleton. It localises to the spindle. The protein resides in the spindle pole. Its subcellular location is the microtubule organizing center. The protein localises to the centrosome. It is found in the cell projection. It localises to the cilium. The protein resides in the flagellum. Its activity is regulated as follows. (Microbial infection) Inactivated by S.flexneri OspC1 and OspC3 proteins, which specifically bind the apo-form of calmodulin, thereby preventing calcium-binding and activity. Functionally, calmodulin acts as part of a calcium signal transduction pathway by mediating the control of a large number of enzymes, ion channels, aquaporins and other proteins through calcium-binding. Calcium-binding is required for the activation of calmodulin. Among the enzymes to be stimulated by the calmodulin-calcium complex are a number of protein kinases, such as myosin light-chain kinases and calmodulin-dependent protein kinase type II (CaMK2), and phosphatases. Together with CCP110 and centrin, is involved in a genetic pathway that regulates the centrosome cycle and progression through cytokinesis. Is a regulator of voltage-dependent L-type calcium channels. Mediates calcium-dependent inactivation of CACNA1C. Positively regulates calcium-activated potassium channel activity of KCNN2. Forms a potassium channel complex with KCNQ1 and regulates electrophysiological activity of the channel via calcium-binding. Acts as a sensor to modulate the endoplasmic reticulum contacts with other organelles mediated by VMP1:ATP2A2. (Microbial infection) Required for Legionella pneumophila SidJ glutamylase activity. Its function is as follows. (Microbial infection) Required for C.violaceum CopC and S.flexneri OspC3 arginine ADP-riboxanase activity. This Homo sapiens (Human) protein is Calmodulin-1.